The chain runs to 82 residues: Small ribosomal subunit protein bS16 (82 aa).

The protein belongs to the bacterial ribosomal protein bS16 family.

This Clostridium botulinum (strain Okra / Type B1) protein is Small ribosomal subunit protein bS16.